The following is a 538-amino-acid chain: ATP-dependent rRNA helicase RRP3 (538 aa).

Residues 1–11 (MSSAKRVKLSH) show a composition bias toward basic residues. A disordered region spans residues 1 to 112 (MSSAKRVKLS…SKEETPTKSF (112 aa)). Low complexity predominate over residues 34-47 (KKITQAPKAAAPIK). A compositionally biased stretch (acidic residues) spans 53-85 (AEEDDDDDDKDDKDEEDEEQNDDSSDEASENDD). Residues 92-112 (EATKEGQTELPSKEETPTKSF) show a composition bias toward basic and acidic residues. The short motif at 110-138 (KSFRDLGIVEPLCEACEALKFKKPTPIQE) is the Q motif element. The Helicase ATP-binding domain occupies 141–312 (IPLALQGRDV…RASLRDPLKV (172 aa)). Residue 154–161 (AETGSGKT) participates in ATP binding. Residues 260-263 (DEAD) carry the DEAD box motif. Positions 336 to 486 (HKDVYLIYLA…LFQPDKEEVM (151 aa)) constitute a Helicase C-terminal domain. The span at 498–512 (HAREEMKALHEDRGK) shows a compositional bias: basic and acidic residues. The disordered stretch occupies residues 498 to 538 (HAREEMKALHEDRGKKGAVLKGRKRGSATKRRHDDMDAEEG). Over residues 513–528 (KGAVLKGRKRGSATKR) the composition is skewed to basic residues.

The protein belongs to the DEAD box helicase family. DDX47/RRP3 subfamily. Interacts with the SSU processome.

Its subcellular location is the nucleus. The enzyme catalyses ATP + H2O = ADP + phosphate + H(+). Functionally, ATP-dependent rRNA helicase required for pre-ribosomal RNA processing. Involved in the maturation of the 35S-pre-rRNA and to its cleavage to mature 18S rRNA. This is ATP-dependent rRNA helicase RRP3 from Pyricularia oryzae (strain 70-15 / ATCC MYA-4617 / FGSC 8958) (Rice blast fungus).